Consider the following 385-residue polypeptide: Putative actin-25 (385 aa).

This sequence belongs to the actin family.

The protein resides in the cytoplasm. Its subcellular location is the cytoskeleton. It catalyses the reaction ATP + H2O = ADP + phosphate + H(+). Functionally, actins are highly conserved proteins that are involved in various types of cell motility and are ubiquitously expressed in all eukaryotic cells. Multiple isoforms are involved in various cellular functions such as cytoskeleton structure, cell mobility, chromosome movement and muscle contraction. The chain is Putative actin-25 (act25) from Dictyostelium discoideum (Social amoeba).